A 163-amino-acid chain; its full sequence is 2-C-methyl-D-erythritol 2,4-cyclodiphosphate synthase (163 aa).

A divalent metal cation-binding residues include D8 and H10. 4-CDP-2-C-methyl-D-erythritol 2-phosphate contacts are provided by residues 8-10 (DVH) and 34-35 (HS). H42 provides a ligand contact to a divalent metal cation. 4-CDP-2-C-methyl-D-erythritol 2-phosphate contacts are provided by residues 56–58 (DIG), 132–135 (TTTE), F139, and R142.

This sequence belongs to the IspF family. As to quaternary structure, homotrimer. A divalent metal cation is required as a cofactor.

The enzyme catalyses 4-CDP-2-C-methyl-D-erythritol 2-phosphate = 2-C-methyl-D-erythritol 2,4-cyclic diphosphate + CMP. It participates in isoprenoid biosynthesis; isopentenyl diphosphate biosynthesis via DXP pathway; isopentenyl diphosphate from 1-deoxy-D-xylulose 5-phosphate: step 4/6. In terms of biological role, involved in the biosynthesis of isopentenyl diphosphate (IPP) and dimethylallyl diphosphate (DMAPP), two major building blocks of isoprenoid compounds. Catalyzes the conversion of 4-diphosphocytidyl-2-C-methyl-D-erythritol 2-phosphate (CDP-ME2P) to 2-C-methyl-D-erythritol 2,4-cyclodiphosphate (ME-CPP) with a corresponding release of cytidine 5-monophosphate (CMP). The protein is 2-C-methyl-D-erythritol 2,4-cyclodiphosphate synthase of Moorella thermoacetica (strain ATCC 39073 / JCM 9320).